Consider the following 645-residue polypeptide: Envelope glycoprotein (645 aa).

An N-terminal signal peptide occupies residues 1–36 (MEGPTHPKPFKDKTFSWDLIILVGVVRVLLRLDVGM). Residues 37 to 589 (ANPSPHQVYN…FNKSPWFTTL (553 aa)) are Extracellular-facing. Asn46 and Asn61 each carry an N-linked (GlcNAc...) asparagine; by host glycan. Cystine bridges form between Cys128/Cys150 and Cys142/Cys155. A disordered region spans residues 238–283 (QAMGPNLVLPEQKPPSRQSQTKSKVATQKPQTNGTTPRSVAPATMS). Polar residues predominate over residues 252-275 (PSRQSQTKSKVATQKPQTNGTTPR). 3 N-linked (GlcNAc...) asparagine; by host glycosylation sites follow: Asn270, Asn305, and Asn310. Intrachain disulfides connect Cys315–Cys318, Cys315–Cys542, and Cys534–Cys541. The CXXC motif lies at 315–318 (CWLC). N-linked (GlcNAc...) asparagine; by host glycans are attached at residues Asn334, Asn337, Asn377, Asn393, and Asn413. A fusion peptide region spans residues 451 to 471 (ISLTVALMLGGLTVGGIAAGV). Coiled-coil stretches lie at residues 479-528 (LETA…ILFL) and 538-574 (KEEC…SQQG). The tract at residues 517–533 (LQNRRGLDILFLQGGGL) is immunosuppression. Residues 534-542 (CAALKEECC) carry the CX6CC motif. The chain crosses the membrane as a helical span at residues 590–610 (ISSIMGPLLILLLILLFGPCI). A lipid anchor (S-palmitoyl cysteine; by host) is attached at Cys609. Topologically, residues 611-645 (LNRLVQFVKDRISVVQALILTQQYQQIQQYDPDRP) are cytoplasmic.

The mature envelope protein (Env) consists of a trimer of SU-TM heterodimers attached by a labile interchain disulfide bond. Specific enzymatic cleavages in vivo yield mature proteins. Envelope glycoproteins are synthesized as an inactive precursor that is N-glycosylated and processed likely by host cell furin or by a furin-like protease in the Golgi to yield the mature SU and TM proteins. The cleavage site between SU and TM requires the minimal sequence [KR]-X-[KR]-R. The R-peptide is released from the C-terminus of the cytoplasmic tail of the TM protein upon particle formation as a result of proteolytic cleavage by the viral protease. Cleavage of this peptide is required for TM to become fusogenic. In terms of processing, the CXXC motif is highly conserved across a broad range of retroviral envelope proteins. It is thought to participate in the formation of a labile disulfide bond possibly with the CX6CC motif present in the transmembrane protein. Isomerization of the intersubunit disulfide bond to an SU intrachain disulfide bond is thought to occur upon receptor recognition in order to allow membrane fusion. Post-translationally, the transmembrane protein is palmitoylated. The R-peptide is palmitoylated.

Its subcellular location is the virion membrane. The protein resides in the host cell membrane. Functionally, the surface protein (SU) attaches the virus to the host cell by binding to its receptor. This interaction triggers the refolding of the transmembrane protein (TM) and is thought to activate its fusogenic potential by unmasking its fusion peptide. Fusion occurs at the host cell plasma membrane. In terms of biological role, the transmembrane protein (TM) acts as a class I viral fusion protein. Under the current model, the protein has at least 3 conformational states: pre-fusion native state, pre-hairpin intermediate state, and post-fusion hairpin state. During viral and target cell membrane fusion, the coiled coil regions (heptad repeats) assume a trimer-of-hairpins structure, positioning the fusion peptide in close proximity to the C-terminal region of the ectodomain. The formation of this structure appears to drive apposition and subsequent fusion of viral and target cell membranes. Membranes fusion leads to delivery of the nucleocapsid into the cytoplasm. In Feline sarcoma virus (strain SM) (Sm-FeSV), this protein is Envelope glycoprotein (env).